A 442-amino-acid polypeptide reads, in one-letter code: Chitinase-like protein Idgf4 (442 aa).

Residues 1-21 form the signal peptide; sequence MKLYALFSLLVGSLAIGQISA. The 418-residue stretch at 25 to 442 folds into the GH18 domain; that stretch reads HHLLCYYDGN…PILRQVKSKL (418 aa). C29 and C56 form a disulfide bridge. Residue N224 is glycosylated (N-linked (GlcNAc...) asparagine). C343 and C426 are oxidised to a cystine.

This sequence belongs to the glycosyl hydrolase 18 family. IDGF subfamily. Post-translationally, glycosylated. As to expression, primarily expressed in yolk cells and fat body. In larvae, it is expressed in the imaginal ring, the salivary duct, large salivary gland cells and weakly expressed in imaginal disks. More strongly expressed than Idgf1 and Idgf3.

The protein localises to the secreted. Functionally, cooperates with insulin-like peptides to stimulate the proliferation, polarization and motility of imaginal disk cells. May act by stabilizing the binding of insulin-like peptides to its receptor through a simultaneous interaction with both molecules to form a multiprotein signaling complex. This Drosophila melanogaster (Fruit fly) protein is Chitinase-like protein Idgf4 (Idgf4).